The chain runs to 97 residues: Anti-sigma-YlaC factor YlaD (97 aa).

Residues His-29, Cys-33, and Cys-36 each contribute to the Zn(2+) site. Residues 71 to 93 (YYGLLIMKAACWFGAAVAMMLII) form a helical membrane-spanning segment.

It belongs to the zinc-associated anti-sigma factor (ZAS) superfamily. Requires Zn(2+) as cofactor.

It is found in the cell membrane. Its function is as follows. Anti-sigma factor for YlaC. In Bacillus subtilis (strain 168), this protein is Anti-sigma-YlaC factor YlaD (ylaD).